The following is a 369-amino-acid chain: Glutamine synthetase (369 aa).

The 80-residue stretch at 23–102 folds into the GS beta-grasp domain; the sequence is VIAEYIWVDS…VLAECWNNDG (80 aa). The 261-residue stretch at 109 to 369 folds into the GS catalytic domain; it reads HRHEAAKLFE…MSKEFERESS (261 aa).

The protein belongs to the glutamine synthetase family. In terms of assembly, homooctamer.

It is found in the cytoplasm. It catalyses the reaction L-glutamate + NH4(+) + ATP = L-glutamine + ADP + phosphate + H(+). This Eremothecium gossypii (strain ATCC 10895 / CBS 109.51 / FGSC 9923 / NRRL Y-1056) (Yeast) protein is Glutamine synthetase (GLN1).